The primary structure comprises 167 residues: Small ribosomal subunit protein uS5 (167 aa).

The region spanning 12 to 75 (LQEKLIAVNR…EKARRNIVTV (64 aa)) is the S5 DRBM domain.

Belongs to the universal ribosomal protein uS5 family. As to quaternary structure, part of the 30S ribosomal subunit. Contacts proteins S4 and S8.

With S4 and S12 plays an important role in translational accuracy. In terms of biological role, located at the back of the 30S subunit body where it stabilizes the conformation of the head with respect to the body. This Shewanella baltica (strain OS223) protein is Small ribosomal subunit protein uS5.